The sequence spans 120 residues: Testis-expressed protein 48 (120 aa).

Over residues 29–45 (KVPSQTQEHKPSTQNLL) the composition is skewed to polar residues. The tract at residues 29–86 (KVPSQTQEHKPSTQNLLLQKDELDRQNPKRINAVSHLPSRTPLIQTKKSTSSSSSEFE) is disordered. Low complexity predominate over residues 74–83 (TKKSTSSSSS).

The protein is Testis-expressed protein 48 of Homo sapiens (Human).